Reading from the N-terminus, the 993-residue chain is Vinculin (993 aa).

Repeat copies occupy residues 258-364 (DSDN…TKEI) and 373-480 (TNTQ…ELVD). The tract at residues 258-480 (DSDNVTVMRK…LRNKLRELVD (223 aa)) is 2 X repeats. Positions 730 to 797 (ITGAGGSRPP…PPPETDDEEE (68 aa)) are disordered. Over residues 758 to 768 (VHDRIYIREDI) the composition is skewed to basic and acidic residues. Positions 769-790 (PTPPRPPPPVEISPPPRPPPPP) are enriched in pro residues.

The protein belongs to the vinculin/alpha-catenin family. As to quaternary structure, exhibits self-association properties.

It localises to the cytoplasm. Its subcellular location is the cytoskeleton. It is found in the cell junction. The protein localises to the adherens junction. The protein resides in the cell membrane. Involved in cell adhesion. May be involved in the attachment of the actin-based microfilaments to the plasma membrane. The sequence is that of Vinculin from Brugia malayi (Filarial nematode worm).